We begin with the raw amino-acid sequence, 230 residues long: UPF0758 protein Glov_0523 (230 aa).

In terms of domain architecture, MPN spans 108–230 (RFTSPAQVFD…YFSFVESGLL (123 aa)). H179, H181, and D192 together coordinate Zn(2+). The JAMM motif motif lies at 179-192 (HNHPSGDPAPSRED).

This sequence belongs to the UPF0758 family.

This chain is UPF0758 protein Glov_0523, found in Trichlorobacter lovleyi (strain ATCC BAA-1151 / DSM 17278 / SZ) (Geobacter lovleyi).